We begin with the raw amino-acid sequence, 84 residues long: Small ribosomal subunit protein eS27-like (84 aa).

A compositionally biased stretch (basic and acidic residues) spans 1 to 16 (MPLARDLLHPSLDEEK). The interval 1-23 (MPLARDLLHPSLDEEKKKHKKKR) is disordered. The C4-type zinc finger occupies 38 to 60 (PGCYKITTVFSHAQTVVLCVGCS).

Belongs to the eukaryotic ribosomal protein eS27 family. Requires Zn(2+) as cofactor.

The polypeptide is Small ribosomal subunit protein eS27-like (RPS27L) (Bos taurus (Bovine)).